Here is a 159-residue protein sequence, read N- to C-terminus: MSTDARANHRIKSIEIDEESLAAASRDQEQERQVAIFDLLEGNYFEPAEAGDGPYDVRLSLIENRLAFDIASAGHARRHLLSLSPFRGVIKDYFLICDSYYSAIRNSSPQQIEALDMGRRGLHNEGSNLLRERLEGKVKTDLDTARRLFTLICALHWRG.

Belongs to the UPF0262 family.

This is UPF0262 protein CCNA_02430 from Caulobacter vibrioides (strain NA1000 / CB15N) (Caulobacter crescentus).